A 220-amino-acid chain; its full sequence is Cytidylate kinase (220 aa).

Position 9 to 17 (9 to 17) interacts with ATP; that stretch reads GPAASGKST.

The protein belongs to the cytidylate kinase family. Type 1 subfamily.

It is found in the cytoplasm. The enzyme catalyses CMP + ATP = CDP + ADP. It carries out the reaction dCMP + ATP = dCDP + ADP. The chain is Cytidylate kinase from Thermotoga petrophila (strain ATCC BAA-488 / DSM 13995 / JCM 10881 / RKU-1).